The chain runs to 463 residues: Nicotinate phosphoribosyltransferase pncB2 (463 aa).

At His202 the chain carries Phosphohistidine.

The protein belongs to the NAPRTase family. Transiently phosphorylated on a His residue during the reaction cycle. Phosphorylation strongly increases the affinity for substrates and increases the rate of nicotinate D-ribonucleotide production. Dephosphorylation regenerates the low-affinity form of the enzyme, leading to product release.

It carries out the reaction nicotinate + 5-phospho-alpha-D-ribose 1-diphosphate + ATP + H2O = nicotinate beta-D-ribonucleotide + ADP + phosphate + diphosphate. Its pathway is cofactor biosynthesis; NAD(+) biosynthesis; nicotinate D-ribonucleotide from nicotinate: step 1/1. In terms of biological role, involved in the Preiss-Handler pathway, which is a recycling route that permits the salvage of free nicotinamide (NM) and nicotinic acid (Na) involved in the NAD biosynthesis. Catalyzes the synthesis of beta-nicotinate D-ribonucleotide from nicotinate and 5-phospho-D-ribose 1-phosphate at the expense of ATP. It is not able to use nicotinamide. PncB2 appears to be responsible for the increased salvage synthesis of NAD during infection of host tissues. The sequence is that of Nicotinate phosphoribosyltransferase pncB2 (pncB2) from Mycobacterium tuberculosis (strain CDC 1551 / Oshkosh).